The sequence spans 354 residues: tRNA-specific 2-thiouridylase MnmA (354 aa).

Residues 6-13 (LLSGGVDS) and Leu33 contribute to the ATP site. Cys100 (nucleophile) is an active-site residue. Cys100 and Cys195 are joined by a disulfide. Gly123 is a binding site for ATP. An interaction with tRNA region spans residues 145 to 147 (KDQ). Cys195 functions as the Cysteine persulfide intermediate in the catalytic mechanism.

This sequence belongs to the MnmA/TRMU family.

The protein localises to the cytoplasm. It catalyses the reaction S-sulfanyl-L-cysteinyl-[protein] + uridine(34) in tRNA + AH2 + ATP = 2-thiouridine(34) in tRNA + L-cysteinyl-[protein] + A + AMP + diphosphate + H(+). Its function is as follows. Catalyzes the 2-thiolation of uridine at the wobble position (U34) of tRNA, leading to the formation of s(2)U34. The polypeptide is tRNA-specific 2-thiouridylase MnmA (Borrelia duttonii (strain Ly)).